Here is a 426-residue protein sequence, read N- to C-terminus: Immunoglobulin mu Fc receptor (426 aa).

A signal peptide spans methionine 1–threonine 16. In terms of domain architecture, Ig-like spans arginine 24–valine 121. 2 disulfides stabilise this stretch: cysteine 37–cysteine 103 and cysteine 49–cysteine 58. Phosphothreonine is present on threonine 91. Residues lysine 178–alanine 212 form a disordered region. The helical transmembrane segment at phenylalanine 267–valine 287 threads the bilayer. Disordered regions lie at residues arginine 306–aspartate 346 and aspartate 401–glutamine 426. The span at proline 415–glutamine 426 shows a compositional bias: pro residues.

In terms of assembly, interacts (via Ig-like domain) with IGHM (via CH4/Cmu4 domain), both secreted and membrane-bound IgM; the interaction is glycan-independent and multivalent theoretically involving up to eight binding sites for the IgM pentamer. Post-translationally, phosphorylated on both Tyr and Ser residues. O-glycosylated. Sialylated. O-linked glycans regulate trafficking to the plasma membrane.

The protein resides in the cell membrane. Its subcellular location is the early endosome membrane. The protein localises to the golgi apparatus. It localises to the trans-Golgi network membrane. It is found in the lysosome membrane. High-affinity Fc receptor for immunoglobulin M (IgM), both secreted and membrane-bound IgM. Primarily regulates IgM transport and homeostasis. In lymphoid cells, enables exocytosis of membrane-bound IgM on the plasma membrane as well as endocytosis of IgM-antigen complexes toward lysosomes for degradation. In mucosal epithelium, mediates retrotranscytosis of antigen-IgM complexes across mucosal M cells toward antigen-presenting cells in mucosal lymphoid tissues. Triggers costimulatory signaling and mediates most of IgM effector functions involved in B cell development and primary immune response to infection. Likely limits tonic IgM BCR signaling to self-antigens for proper negative selection of autoreactive B cells in the bone marrow and for the maintenance of regulatory B cell pool in peripheral lymphoid organs. Mediates antibody responses to T cell-dependent and T cell-independent antigens and promotes induction of an efficient neutralizing IgG response. Engages in cross-talk with antigen-receptor signaling via the non-canonical NF-kappa-B, MAP kinases and calcium signaling pathways. This Rattus norvegicus (Rat) protein is Immunoglobulin mu Fc receptor.